The chain runs to 416 residues: Serine hydroxymethyltransferase (416 aa).

Residues Leu121 and 125–127 (GHL) each bind (6S)-5,6,7,8-tetrahydrofolate. Residue Lys229 is modified to N6-(pyridoxal phosphate)lysine.

It belongs to the SHMT family. In terms of assembly, homodimer. Pyridoxal 5'-phosphate is required as a cofactor.

Its subcellular location is the cytoplasm. It carries out the reaction (6R)-5,10-methylene-5,6,7,8-tetrahydrofolate + glycine + H2O = (6S)-5,6,7,8-tetrahydrofolate + L-serine. Its pathway is one-carbon metabolism; tetrahydrofolate interconversion. It participates in amino-acid biosynthesis; glycine biosynthesis; glycine from L-serine: step 1/1. Catalyzes the reversible interconversion of serine and glycine with tetrahydrofolate (THF) serving as the one-carbon carrier. This reaction serves as the major source of one-carbon groups required for the biosynthesis of purines, thymidylate, methionine, and other important biomolecules. Also exhibits THF-independent aldolase activity toward beta-hydroxyamino acids, producing glycine and aldehydes, via a retro-aldol mechanism. In Neisseria meningitidis serogroup A / serotype 4A (strain DSM 15465 / Z2491), this protein is Serine hydroxymethyltransferase.